The primary structure comprises 198 residues: Ribosome maturation factor RimP (198 aa).

The protein belongs to the RimP family.

Its subcellular location is the cytoplasm. Required for maturation of 30S ribosomal subunits. This is Ribosome maturation factor RimP from Rhizobium etli (strain CIAT 652).